Reading from the N-terminus, the 139-residue chain is Putative pre-16S rRNA nuclease (139 aa).

It belongs to the YqgF nuclease family.

It localises to the cytoplasm. Functionally, could be a nuclease involved in processing of the 5'-end of pre-16S rRNA. This chain is Putative pre-16S rRNA nuclease, found in Photorhabdus laumondii subsp. laumondii (strain DSM 15139 / CIP 105565 / TT01) (Photorhabdus luminescens subsp. laumondii).